We begin with the raw amino-acid sequence, 179 residues long: UPF0302 protein EF_1554 (179 aa).

Belongs to the UPF0302 family.

This Enterococcus faecalis (strain ATCC 700802 / V583) protein is UPF0302 protein EF_1554.